We begin with the raw amino-acid sequence, 415 residues long: Esterase FrsA (415 aa).

This sequence belongs to the FrsA family. Monomer in solution. Homodimer. Forms a 1:1 complex with the unphosphorylated form of the EIIA component of the glucose-specific PTS system (IIAGlc).

It carries out the reaction a carboxylic ester + H2O = an alcohol + a carboxylate + H(+). In terms of biological role, catalyzes the hydrolysis of esters. In vitro, prefers short chain alkanoate ester as substrate. Displays highest activity towards p-nitrophenyl acetate (pNPA). Has weaker activity towards p-nitrophenyl butyrate (pNPB). The sequence is that of Esterase FrsA from Vibrio vulnificus (strain CMCP6).